The following is a 389-amino-acid chain: Phospho-N-acetylmuramoyl-pentapeptide-transferase (389 aa).

11 helical membrane passes run 25–45, 74–94, 97–117, 134–154, 167–187, 190–210, 222–242, 259–279, 286–306, 311–331, and 366–386; these read RAVMANVTALVIGLGFGPWVI, MGGVLVLISIAISTLLWCDWG, FIWVVLLVTLGYGAIGWVDDY, FFWQTLIGLVAAVYLAFSVSE, WIEGGMFADVPYKMNLIVPFF, VSYPLGVTGFIVLTYLVIVGS, GLVIMPVVLVGGGLGVFAYVM, AGELLIFCSAMAGAGLAFLWF, VFMGDVGALALGGALGTVAVI, IVLFVMGGIFVVETLSVMLQV, and QVTVRFWIITMLLVLIGLSSL.

Belongs to the glycosyltransferase 4 family. MraY subfamily. The cofactor is Mg(2+).

The protein localises to the cell inner membrane. The catalysed reaction is UDP-N-acetyl-alpha-D-muramoyl-L-alanyl-gamma-D-glutamyl-meso-2,6-diaminopimeloyl-D-alanyl-D-alanine + di-trans,octa-cis-undecaprenyl phosphate = di-trans,octa-cis-undecaprenyl diphospho-N-acetyl-alpha-D-muramoyl-L-alanyl-D-glutamyl-meso-2,6-diaminopimeloyl-D-alanyl-D-alanine + UMP. It functions in the pathway cell wall biogenesis; peptidoglycan biosynthesis. Catalyzes the initial step of the lipid cycle reactions in the biosynthesis of the cell wall peptidoglycan: transfers peptidoglycan precursor phospho-MurNAc-pentapeptide from UDP-MurNAc-pentapeptide onto the lipid carrier undecaprenyl phosphate, yielding undecaprenyl-pyrophosphoryl-MurNAc-pentapeptide, known as lipid I. In Cupriavidus metallidurans (strain ATCC 43123 / DSM 2839 / NBRC 102507 / CH34) (Ralstonia metallidurans), this protein is Phospho-N-acetylmuramoyl-pentapeptide-transferase.